Reading from the N-terminus, the 433-residue chain is Glutamate-rich protein 2 (433 aa).

Disordered regions lie at residues V56–P86, D113–Q161, S189–T273, C308–P344, and E394–S433. A compositionally biased stretch (pro residues) spans P63–P85. Positions S114–A127 are enriched in polar residues. 2 stretches are compositionally biased toward basic and acidic residues: residues D199–Q214 and A244–S258. Residues L259–T273 are compositionally biased toward polar residues. Acidic residues-rich tracts occupy residues C308–E334 and Q397–S433.

The chain is Glutamate-rich protein 2 (Erich2) from Rattus norvegicus (Rat).